Here is a 35-residue protein sequence, read N- to C-terminus: uncharacterized protein (35 aa).

The helical transmembrane segment at 14–34 threads the bilayer; the sequence is LAHLIGIIYLIIILGTLVMLF.

The protein localises to the endoplasmic reticulum membrane. This is an uncharacterized protein from Saccharomyces cerevisiae (strain ATCC 204508 / S288c) (Baker's yeast).